The following is a 1399-amino-acid chain: DNA-directed RNA polymerase subunit beta' (1399 aa).

The Zn(2+) site is built by C70, C72, C85, and C88. 3 residues coordinate Mg(2+): D460, D462, and D464. C814, C888, C895, and C898 together coordinate Zn(2+). A disordered region spans residues 1367-1399 (SERKRQRDLGKPQRVSASEAEAALTEALNSSGN). Low complexity predominate over residues 1382 to 1399 (SASEAEAALTEALNSSGN).

It belongs to the RNA polymerase beta' chain family. The RNAP catalytic core consists of 2 alpha, 1 beta, 1 beta' and 1 omega subunit. When a sigma factor is associated with the core the holoenzyme is formed, which can initiate transcription. Mg(2+) is required as a cofactor. Requires Zn(2+) as cofactor.

The catalysed reaction is RNA(n) + a ribonucleoside 5'-triphosphate = RNA(n+1) + diphosphate. In terms of biological role, DNA-dependent RNA polymerase catalyzes the transcription of DNA into RNA using the four ribonucleoside triphosphates as substrates. This is DNA-directed RNA polymerase subunit beta' from Pseudomonas paraeruginosa (strain DSM 24068 / PA7) (Pseudomonas aeruginosa (strain PA7)).